We begin with the raw amino-acid sequence, 304 residues long: Prephenate dehydratase (304 aa).

Residues 3 to 178 (RIAYFGPVGT…ARTRFLLMRR (176 aa)) enclose the Prephenate dehydratase domain. One can recognise an ACT domain in the interval 193-271 (SIVAAAANRT…DVRFLGSFAR (79 aa)).

It catalyses the reaction prephenate + H(+) = 3-phenylpyruvate + CO2 + H2O. The protein operates within amino-acid biosynthesis; L-phenylalanine biosynthesis; phenylpyruvate from prephenate: step 1/1. The polypeptide is Prephenate dehydratase (pheA) (Amycolatopsis methanolica).